Reading from the N-terminus, the 151-residue chain is UPF0756 membrane protein GK2737 (151 aa).

The next 4 membrane-spanning stretches (helical) occupy residues 5 to 25 (VLFL…SLIV), 53 to 73 (WGVT…EIGF), 79 to 99 (SLQS…ALIA), and 121 to 141 (ILAV…AGIA).

It belongs to the UPF0756 family.

It localises to the cell membrane. This Geobacillus kaustophilus (strain HTA426) protein is UPF0756 membrane protein GK2737.